The following is a 71-amino-acid chain: Large ribosomal subunit protein bL31 (71 aa).

Residues Cys-16, Cys-18, Cys-38, and Cys-41 each coordinate Zn(2+).

It belongs to the bacterial ribosomal protein bL31 family. Type A subfamily. In terms of assembly, part of the 50S ribosomal subunit. It depends on Zn(2+) as a cofactor.

Binds the 23S rRNA. The protein is Large ribosomal subunit protein bL31 of Neisseria gonorrhoeae (strain ATCC 700825 / FA 1090).